The chain runs to 86 residues: Small ribosomal subunit protein bS20 (86 aa).

The span at 1–16 (MANIKSQEKRIRTNER) shows a compositional bias: basic and acidic residues. The disordered stretch occupies residues 1-25 (MANIKSQEKRIRTNERRRLRNQSVK).

It belongs to the bacterial ribosomal protein bS20 family.

Binds directly to 16S ribosomal RNA. This is Small ribosomal subunit protein bS20 from Mycobacterium sp. (strain JLS).